A 573-amino-acid polypeptide reads, in one-letter code: Potassium-transporting ATPase potassium-binding subunit (573 aa).

The next 10 helical transmembrane spans lie at 6 to 26, 66 to 86, 135 to 155, 177 to 197, 257 to 277, 283 to 303, 382 to 402, 428 to 448, 493 to 513, and 537 to 557; these read ILFA…GSYI, FFSL…ILLL, ALAV…IALI, IFWI…FQGV, IQMV…GKWV, GWLI…VMTI, IFGG…LAVF, MFAL…AAVI, ITIA…VIML, and FIFA…TIFP.

It belongs to the KdpA family. As to quaternary structure, the system is composed of three essential subunits: KdpA, KdpB and KdpC.

Its subcellular location is the cell inner membrane. Part of the high-affinity ATP-driven potassium transport (or Kdp) system, which catalyzes the hydrolysis of ATP coupled with the electrogenic transport of potassium into the cytoplasm. This subunit binds the periplasmic potassium ions and delivers the ions to the membrane domain of KdpB through an intramembrane tunnel. This is Potassium-transporting ATPase potassium-binding subunit from Francisella tularensis subsp. novicida (strain U112).